A 131-amino-acid polypeptide reads, in one-letter code: Small ribosomal subunit protein uS9c (131 aa).

This sequence belongs to the universal ribosomal protein uS9 family.

It localises to the plastid. The protein resides in the chloroplast. The chain is Small ribosomal subunit protein uS9c (rps9) from Emiliania huxleyi (Coccolithophore).